A 182-amino-acid chain; its full sequence is Ribosome-recycling factor (182 aa).

The protein belongs to the RRF family.

It is found in the cytoplasm. Functionally, responsible for the release of ribosomes from messenger RNA at the termination of protein biosynthesis. May increase the efficiency of translation by recycling ribosomes from one round of translation to another. The sequence is that of Ribosome-recycling factor from Synechococcus sp. (strain JA-2-3B'a(2-13)) (Cyanobacteria bacterium Yellowstone B-Prime).